Reading from the N-terminus, the 433-residue chain is Agnestins efflux protein AgnL12 (433 aa).

Polar residues-rich tracts occupy residues 1–10 (MSRSTSTELQ) and 25–40 (SIAS…PPST). The disordered stretch occupies residues 1 to 40 (MSRSTSTELQQELPASKEVPPDPTSIASSETASGSKPPST). The next 12 helical transmembrane spans lie at 47–67 (ILVL…TNAF), 87–107 (ISWI…ISGY), 116–136 (LLIC…SLST), 141–161 (IFLT…LPAM), 174–194 (LAMG…PIAL), 205–225 (WTVR…CLAI), 248–268 (VMIF…SPFF), 285–305 (FYMV…PGLI), 309–329 (VGNY…ACCW), 335–355 (VGGI…VISL), 370–390 (GVAM…GTPI), and 401–421 (LGLS…ILLA).

This sequence belongs to the major facilitator superfamily. Monocarboxylate porter (TC 2.A.1.13) family.

Its subcellular location is the cell membrane. Efflux pump that may be involved in the secretion of agnestins, dihydroxy-xanthone metabolites. This chain is Agnestins efflux protein AgnL12, found in Paecilomyces divaricatus (Penicillium divaricatum).